A 101-amino-acid polypeptide reads, in one-letter code: DNA-binding protein Fis (101 aa).

Positions 77–96 (QTRAANMLGINRGTLRKKLK) form a DNA-binding region, H-T-H motif.

It belongs to the transcriptional regulatory Fis family. Homodimer.

In terms of biological role, activates ribosomal RNA transcription. Plays a direct role in upstream activation of rRNA promoters. The chain is DNA-binding protein Fis from Shewanella sediminis (strain HAW-EB3).